A 697-amino-acid chain; its full sequence is Zinc finger and BTB domain-containing protein 24 (697 aa).

Positions 10 to 133 constitute a BTB domain; the sequence is GQLVVHSDAH…AYTDFQNNHS (124 aa). The span at 131 to 142 shows a compositional bias: polar residues; it reads NHSSPKPTTLNT. Disordered regions lie at residues 131 to 176 and 209 to 254; these read NHSS…EEKS and EQIA…SRYS. A DNA-binding region (a.T hook) is located at residues 159-171; the sequence is KRKRGRPKKVNTL. Residues 212 to 245 are compositionally biased toward basic and acidic residues; sequence AAKEKEESEPTCEPSREEEMPVEKDENYDPKTED. C2H2-type zinc fingers lie at residues 294–316, 322–344, 350–372, 378–400, 406–428, 434–456, 462–484, and 490–512; these read ARCK…QRSH, FKCN…TRMH, YTCT…MSLH, FTCD…YRVH, PECK…LRTH, FTCE…IRIH, YSCG…CILH, and FSCP…LKIH. Positions 652–697 are disordered; the sequence is QEQTEELHLATSTSDPAQHLQLTQEPGPPPPTHHVPQPTPLGQEQS. A compositionally biased stretch (pro residues) spans 677–690; that stretch reads PGPPPPTHHVPQPT.

Belongs to the krueppel C2H2-type zinc-finger protein family. As to quaternary structure, interacts with MN1. Widely expressed, with highest levels in naive B-cells.

It localises to the nucleus. Functionally, may be involved in BMP2-induced transcription. In Homo sapiens (Human), this protein is Zinc finger and BTB domain-containing protein 24 (ZBTB24).